Here is a 173-residue protein sequence, read N- to C-terminus: MDIAIQHPWFKRALGPFYPSRLFDQFFGEGLFEYDLLPFLSSTISPYYRQPVFRSVLDSGISEVRSDRDKFVIFLDVKHFSPEDLTVKVLEDFVEIHGKHNERQDDHGYISREFHRRYRLPSNVDQSALSCSLSADGMLTFSGPKVPSGVDAGHSERAIPVSREEKPSSAPSS.

Methionine 1 bears the N-acetylmethionine mark. The segment at methionine 1–glutamate 63 is required for complex formation with BFSP1 and BFSP2. Glutamine 6 bears the Deamidated glutamine; partial mark. At serine 45 the chain carries Phosphoserine. A Deamidated glutamine; partial modification is found at glutamine 50. The sHSP domain occupies valine 52–serine 162. Residues lysine 70 and lysine 99 each carry the N6-acetyllysine modification. Residue histidine 100 participates in Zn(2+) binding. Asparagine 101 is modified (deamidated asparagine; partial). The Zn(2+) site is built by glutamate 102 and histidine 107. Serine 122 carries the post-translational modification Phosphoserine. Asparagine 123 bears the Deamidated asparagine; partial mark. The segment at proline 144 to serine 173 is disordered. The span at glycine 153–proline 167 shows a compositional bias: basic and acidic residues. A Zn(2+)-binding site is contributed by histidine 154. The O-linked (GlcNAc) serine glycan is linked to serine 162.

It belongs to the small heat shock protein (HSP20) family. In terms of assembly, heteromer composed of three CRYAA and one CRYAB subunits. Inter-subunit bridging via zinc ions enhances stability, which is crucial as there is no protein turn over in the lens. Can also form homodimers and homotetramers (dimers of dimers) which serve as the building blocks of homooligomers. Within homooligomers, the zinc-binding motif is created from residues of 3 different molecules. His-100 and Glu-102 from one molecule are ligands of the zinc ion, and His-107 and His-154 residues from additional molecules complete the site with tetrahedral coordination geometry. Part of a complex required for lens intermediate filament formation composed of BFSP1, BFSP2 and CRYAA. Post-translationally, acetylation at Lys-70 may increase chaperone activity. Undergoes age-dependent proteolytical cleavage at the C-terminus.

The protein localises to the cytoplasm. Its subcellular location is the nucleus. Its function is as follows. Contributes to the transparency and refractive index of the lens. Acts as a chaperone, preventing aggregation of various proteins under a wide range of stress conditions. Required for the correct formation of lens intermediate filaments as part of a complex composed of BFSP1, BFSP2 and CRYAA. The protein is Alpha-crystallin A chain (CRYAA) of Halichoerus grypus (Gray seal).